The sequence spans 355 residues: NADH-quinone oxidoreductase subunit H (355 aa).

8 consecutive transmembrane segments (helical) span residues 25 to 45 (VVRILVVSVVILLCVAYLILW), 91 to 111 (WLYLIAPVMTVVPAFAVWAVI), 126 to 146 (LLYAMAISSIGVYAVILAGWA), 170 to 190 (MGFALVLVLMTAGSLNLSEIV), 205 to 225 (FLSWNWLPLLPAFVVYFISGI), 253 to 273 (MAFALFFLAEYINMIVISALA), 290 to 310 (FIPGIFWLVLKVFALLSVFIW), and 330 to 350 (VFLPVTVVWVIVVGFWMMSPL).

Belongs to the complex I subunit 1 family. In terms of assembly, NDH-1 is composed of 14 different subunits. Subunits NuoA, H, J, K, L, M, N constitute the membrane sector of the complex.

It is found in the cell inner membrane. The enzyme catalyses a quinone + NADH + 5 H(+)(in) = a quinol + NAD(+) + 4 H(+)(out). Its function is as follows. NDH-1 shuttles electrons from NADH, via FMN and iron-sulfur (Fe-S) centers, to quinones in the respiratory chain. The immediate electron acceptor for the enzyme in this species is believed to be ubiquinone. Couples the redox reaction to proton translocation (for every two electrons transferred, four hydrogen ions are translocated across the cytoplasmic membrane), and thus conserves the redox energy in a proton gradient. This subunit may bind ubiquinone. This chain is NADH-quinone oxidoreductase subunit H, found in Burkholderia cenocepacia (strain HI2424).